The chain runs to 515 residues: C-glycoside 3-oxidase (515 aa).

An FAD-binding site is contributed by E41. Residues E62–V82 are compositionally biased toward basic and acidic residues. The disordered stretch occupies residues E62–Q90. Positions 118, 120, 124, 129, 131, and 237 each coordinate FAD. H444 functions as the Proton acceptor in the catalytic mechanism. N478 and T490 together coordinate FAD.

The protein belongs to the GMC oxidoreductase family. As to quaternary structure, monomer. It depends on FAD as a cofactor.

It catalyses the reaction isoorientin + O2 = 3''-dehydroisoorientin + H2O2. The catalysed reaction is mangiferin + O2 = 3'-dehydromangiferin + H2O2. Functionally, FAD-dependent C-glycoside-metabolizing enzyme that participates in the degradation of certain C-glycosides by catalyzing the oxidation of the hydroxyl group at the C3 position of the sugar moiety. Shows oxidase activity toward C-glycosides such as isoorientin and mangiferin but cannot use carminic acid, puerarin, orientin or aloesin. Shows weak activity (100 to 1000-fold lower) with O-glycosides. Probably plays a crucial role in the metabolism of C-glycosides in nature. The chain is C-glycoside 3-oxidase from Microbacterium trichothecenolyticum (Aureobacterium trichothecenolyticum).